Reading from the N-terminus, the 391-residue chain is DNA replication and repair protein RecF (391 aa).

30-37 (GLNGQGKT) contributes to the ATP binding site.

This sequence belongs to the RecF family.

Its subcellular location is the cytoplasm. Functionally, the RecF protein is involved in DNA metabolism; it is required for DNA replication and normal SOS inducibility. RecF binds preferentially to single-stranded, linear DNA. It also seems to bind ATP. In Kineococcus radiotolerans (strain ATCC BAA-149 / DSM 14245 / SRS30216), this protein is DNA replication and repair protein RecF.